The following is a 125-amino-acid chain: Holo-[acyl-carrier-protein] synthase (125 aa).

Mg(2+) is bound by residues D8 and E57.

The protein belongs to the P-Pant transferase superfamily. AcpS family. The cofactor is Mg(2+).

The protein localises to the cytoplasm. The catalysed reaction is apo-[ACP] + CoA = holo-[ACP] + adenosine 3',5'-bisphosphate + H(+). Its function is as follows. Transfers the 4'-phosphopantetheine moiety from coenzyme A to a Ser of acyl-carrier-protein. This chain is Holo-[acyl-carrier-protein] synthase, found in Thermus thermophilus (strain ATCC BAA-163 / DSM 7039 / HB27).